The primary structure comprises 202 residues: 3-isopropylmalate dehydratase small subunit 2 (202 aa).

This sequence belongs to the LeuD family. LeuD type 1 subfamily. As to quaternary structure, heterodimer of LeuC and LeuD.

It carries out the reaction (2R,3S)-3-isopropylmalate = (2S)-2-isopropylmalate. It functions in the pathway amino-acid biosynthesis; L-leucine biosynthesis; L-leucine from 3-methyl-2-oxobutanoate: step 2/4. Catalyzes the isomerization between 2-isopropylmalate and 3-isopropylmalate, via the formation of 2-isopropylmaleate. The protein is 3-isopropylmalate dehydratase small subunit 2 of Bordetella parapertussis (strain 12822 / ATCC BAA-587 / NCTC 13253).